The following is a 156-amino-acid chain: MKLIVIAVGNRMPAWVETAWDDYAKRLPPDCALELREIKPEPRTTGKTPAQMMAAEARRIEAAIPGGALRLALDERGRDLTTMALSQRLEQWRAGGRDVVFLVGGPDGLDDALKSACDGQIRLSSLTLPHPMVRVVLAEQLYRAWAILANHPYHRA.

S-adenosyl-L-methionine-binding positions include leucine 73, glycine 104, and 123-128 (LSSLTL).

Belongs to the RNA methyltransferase RlmH family. As to quaternary structure, homodimer.

Its subcellular location is the cytoplasm. The catalysed reaction is pseudouridine(1915) in 23S rRNA + S-adenosyl-L-methionine = N(3)-methylpseudouridine(1915) in 23S rRNA + S-adenosyl-L-homocysteine + H(+). Specifically methylates the pseudouridine at position 1915 (m3Psi1915) in 23S rRNA. This Bordetella petrii (strain ATCC BAA-461 / DSM 12804 / CCUG 43448) protein is Ribosomal RNA large subunit methyltransferase H.